Reading from the N-terminus, the 347-residue chain is Phosphoribosylformylglycinamidine cyclo-ligase (347 aa).

It belongs to the AIR synthase family.

The protein localises to the cytoplasm. It catalyses the reaction 2-formamido-N(1)-(5-O-phospho-beta-D-ribosyl)acetamidine + ATP = 5-amino-1-(5-phospho-beta-D-ribosyl)imidazole + ADP + phosphate + H(+). It participates in purine metabolism; IMP biosynthesis via de novo pathway; 5-amino-1-(5-phospho-D-ribosyl)imidazole from N(2)-formyl-N(1)-(5-phospho-D-ribosyl)glycinamide: step 2/2. The protein is Phosphoribosylformylglycinamidine cyclo-ligase of Alcanivorax borkumensis (strain ATCC 700651 / DSM 11573 / NCIMB 13689 / SK2).